Here is a 566-residue protein sequence, read N- to C-terminus: Rho GTPase-activating protein gacH (566 aa).

Disordered stretches follow at residues methionine 1 to threonine 56, leucine 65 to lysine 84, serine 128 to serine 168, and lysine 322 to asparagine 366. Over residues serine 14–serine 35 the composition is skewed to low complexity. Residues proline 36–threonine 56 are compositionally biased toward polar residues. A compositionally biased stretch (low complexity) spans leucine 65 to asparagine 83. Positions aspartate 130–asparagine 141 are enriched in acidic residues. Residues asparagine 142 to asparagine 160 show a composition bias toward low complexity. Residues lysine 327–threonine 337 are compositionally biased toward polar residues. Over residues serine 345–glutamine 356 the composition is skewed to low complexity. Residues glycine 369–tyrosine 564 enclose the Rho-GAP domain.

Its subcellular location is the cytoplasm. Functionally, rho GTPase-activating protein involved in the signal transduction pathway. The sequence is that of Rho GTPase-activating protein gacH (gacH) from Dictyostelium discoideum (Social amoeba).